Reading from the N-terminus, the 214-residue chain is Probable GTP-binding protein EngB (214 aa).

An EngB-type G domain is found at 40-212; that stretch reads SLPEIVFVGK…KASFAQCIKH (173 aa). Residues 48 to 55, 75 to 79, 93 to 96, 160 to 163, and 191 to 193 each bind GTP; these read GKSNVGKS, GRTRQ, DLPG, TKSD, and VSS. Mg(2+)-binding residues include Ser-55 and Thr-77.

Belongs to the TRAFAC class TrmE-Era-EngA-EngB-Septin-like GTPase superfamily. EngB GTPase family. Mg(2+) is required as a cofactor.

In terms of biological role, necessary for normal cell division and for the maintenance of normal septation. This is Probable GTP-binding protein EngB from Rickettsia prowazekii (strain Madrid E).